A 420-amino-acid chain; its full sequence is Glutamyl-tRNA reductase (420 aa).

Residues 49 to 52 (TCNR), Ser-109, 114 to 116 (EPQ), and Gln-120 contribute to the substrate site. The Nucleophile role is filled by Cys-50. 189–194 (GAGETI) lines the NADP(+) pocket.

It belongs to the glutamyl-tRNA reductase family. As to quaternary structure, homodimer.

It carries out the reaction (S)-4-amino-5-oxopentanoate + tRNA(Glu) + NADP(+) = L-glutamyl-tRNA(Glu) + NADPH + H(+). Its pathway is porphyrin-containing compound metabolism; protoporphyrin-IX biosynthesis; 5-aminolevulinate from L-glutamyl-tRNA(Glu): step 1/2. Catalyzes the NADPH-dependent reduction of glutamyl-tRNA(Glu) to glutamate 1-semialdehyde (GSA). This is Glutamyl-tRNA reductase from Edwardsiella ictaluri (strain 93-146).